Here is a 388-residue protein sequence, read N- to C-terminus: Coproporphyrin III ferrochelatase (388 aa).

Residues Ser59 and Tyr124 each contribute to the Fe-coproporphyrin III site. Fe(2+) is bound by residues His186 and Glu276. The segment at Gln349 to Asp369 is disordered.

Belongs to the ferrochelatase family.

Its subcellular location is the cytoplasm. It catalyses the reaction Fe-coproporphyrin III + 2 H(+) = coproporphyrin III + Fe(2+). It participates in porphyrin-containing compound metabolism; protoheme biosynthesis. Involved in coproporphyrin-dependent heme b biosynthesis. Catalyzes the insertion of ferrous iron into coproporphyrin III to form Fe-coproporphyrin III. This chain is Coproporphyrin III ferrochelatase, found in Frankia alni (strain DSM 45986 / CECT 9034 / ACN14a).